Here is a 222-residue protein sequence, read N- to C-terminus: Oligoribonuclease (222 aa).

The segment at 19–38 (PMASSSSTGKQEESVNGSLE) is disordered. Residues 21 to 35 (ASSSSTGKQEESVNG) are compositionally biased toward polar residues. The 165-residue stretch at 46–210 (LVWIDLEMTG…DDIRESIKEL (165 aa)) folds into the Exonuclease domain. The active site involves H167.

The protein belongs to the oligoribonuclease family.

Functionally, 3'-to-5' exoribonuclease specific for small oligoribonucleotides. This Arabidopsis thaliana (Mouse-ear cress) protein is Oligoribonuclease.